A 144-amino-acid polypeptide reads, in one-letter code: Histone H2B.2, sperm (144 aa).

The interval 1–51 (MPRSPAKTSPRKGSPRKGSPSRKASPKRGGKGAKRAGKGGRRRRVVKRRRR) is disordered. 5 consecutive short sequence motifs (SPKK motif) follow at residues 4–7 (SPAK), 9–12 (SPRK), 14–17 (SPRK), 19–22 (SPSR), and 25–28 (SPKR). Phosphoserine is present on residues serine 14, serine 19, and serine 25. Residues 24–51 (ASPKRGGKGAKRAGKGGRRRRVVKRRRR) show a composition bias toward basic residues. Serine 131 is a glycosylation site (O-linked (GlcNAc) serine). Lysine 139 participates in a covalent cross-link: Glycyl lysine isopeptide (Lys-Gly) (interchain with G-Cter in ubiquitin).

The protein belongs to the histone H2B family. The nucleosome is a histone octamer containing two molecules each of H2A, H2B, H3 and H4 assembled in one H3-H4 heterotetramer and two H2A-H2B heterodimers. The octamer wraps approximately 147 bp of DNA. In terms of processing, monoubiquitination of Lys-139 gives a specific tag for epigenetic transcriptional activation and is also prerequisite for histone H3 'Lys-4' and 'Lys-79' methylation. Phosphorylated on SPKK motifs 3, 4 and 5; which may regulate DNA binding. Dephosphorylated during maturation of spermatids to mature sperm and rephosphorylated at fertilization.

The protein resides in the nucleus. It is found in the chromosome. Its function is as follows. Core component of nucleosome. Nucleosomes wrap and compact DNA into chromatin, limiting DNA accessibility to the cellular machineries which require DNA as a template. Histones thereby play a central role in transcription regulation, DNA repair, DNA replication and chromosomal stability. DNA accessibility is regulated via a complex set of post-translational modifications of histones, also called histone code, and nucleosome remodeling. The protein is Histone H2B.2, sperm of Parechinus angulosus (Angulate sea urchin).